Here is a 211-residue protein sequence, read N- to C-terminus: Somatotropin (211 aa).

An N-terminal signal peptide occupies residues 1–23 (MASGFLLCPVLLAVFFMSPVEVG). His40 contributes to the Zn(2+) binding site. A disulfide bridge connects residues Cys73 and Cys184. Glu193 lines the Zn(2+) pocket. Cys201 and Cys209 form a disulfide bridge.

This sequence belongs to the somatotropin/prolactin family.

The protein localises to the secreted. Growth hormone plays an important role in growth control and is involved in the regulation of several anabolic processes. Implicated as an osmoregulatory substance important for seawater adaptation. This is Somatotropin (gh) from Lepisosteus osseus (Long-nosed gar).